A 159-amino-acid polypeptide reads, in one-letter code: Transcription elongation factor GreA (159 aa).

Belongs to the GreA/GreB family.

In terms of biological role, necessary for efficient RNA polymerase transcription elongation past template-encoded arresting sites. The arresting sites in DNA have the property of trapping a certain fraction of elongating RNA polymerases that pass through, resulting in locked ternary complexes. Cleavage of the nascent transcript by cleavage factors such as GreA or GreB allows the resumption of elongation from the new 3'terminus. GreA releases sequences of 2 to 3 nucleotides. This is Transcription elongation factor GreA from Psychromonas ingrahamii (strain DSM 17664 / CCUG 51855 / 37).